The sequence spans 336 residues: Cell division protein ZipA (336 aa).

Residues 1-2 (ME) lie on the Periplasmic side of the membrane. The chain crosses the membrane as a helical span at residues 3–23 (LHILFFILAGLLIAVLIGFSL). Residues 24–336 (WSARREKSRI…SRQSYLARVS (313 aa)) are Cytoplasmic-facing. The interval 57 to 76 (SLNPQSYAQTTGQHGETEAD) is disordered. Polar residues predominate over residues 59–70 (NPQSYAQTTGQH).

Belongs to the ZipA family. Interacts with FtsZ via their C-terminal domains.

The protein resides in the cell inner membrane. In terms of biological role, essential cell division protein that stabilizes the FtsZ protofilaments by cross-linking them and that serves as a cytoplasmic membrane anchor for the Z ring. Also required for the recruitment to the septal ring of downstream cell division proteins. The sequence is that of Cell division protein ZipA from Actinobacillus pleuropneumoniae serotype 7 (strain AP76).